Reading from the N-terminus, the 293-residue chain is 4-diphosphocytidyl-2-C-methyl-D-erythritol kinase (293 aa).

Lys-16 is a catalytic residue. 99–109 contacts ATP; the sequence is PMGAGLGGGSS. Asp-141 is a catalytic residue.

This sequence belongs to the GHMP kinase family. IspE subfamily.

The enzyme catalyses 4-CDP-2-C-methyl-D-erythritol + ATP = 4-CDP-2-C-methyl-D-erythritol 2-phosphate + ADP + H(+). It functions in the pathway isoprenoid biosynthesis; isopentenyl diphosphate biosynthesis via DXP pathway; isopentenyl diphosphate from 1-deoxy-D-xylulose 5-phosphate: step 3/6. Its function is as follows. Catalyzes the phosphorylation of the position 2 hydroxy group of 4-diphosphocytidyl-2C-methyl-D-erythritol. The protein is 4-diphosphocytidyl-2-C-methyl-D-erythritol kinase of Burkholderia lata (strain ATCC 17760 / DSM 23089 / LMG 22485 / NCIMB 9086 / R18194 / 383).